The primary structure comprises 494 residues: MDKILYDALTFDDVLLVPAYSNVLPKETVVKSRLTRQIEVNIPLVSAAMDTVTEAELAIALARAGGIGIIHKNLSIDEQARQVAKVKRFESGIIRNPIHLFEDATIQDAIDLMIRHSISGIPVVEHPTPEGCLLLKGIVTNRDLRMTASSDEKITTIMTTNLVTAKEGIDLLTAEDILMRNKIEKLLIIDDNGYLKGLITFKDIQKRKQCPDACKDSQGRLRAGAAVGIRANTMSRVDALVAAGVDVVAVDTAHGHSQAVLDMVATIKQKYPELQVIAGNVATPEAVRDLVKAGADAVKVGIGPGSICTTRIVAGVGMPQLTAIMKCAEEAKKTDIPLIADGGIKYSGDIAKALAAGADSVMMGSVFAGTDESPGETILYEGRRFKAYRGMGSLGAMSEPEGSSDRYFQDVSAETKKYVPEGIEGRIPAKGKLDEVVYQLIGGLKSAMGYCGVRTITELKENTRFVRITSAGLRESHPHDVMITKEAPNYSTSA.

2 consecutive CBS domains span residues 93–154 and 158–217; these read IIRN…DEKI and MTTN…CKDS. NAD(+)-binding positions include D251 and 301-303; that span reads GIG. 2 residues coordinate K(+): G303 and G305. S306 lines the IMP pocket. Residue C308 participates in K(+) binding. The active-site Thioimidate intermediate is the C308. IMP contacts are provided by residues 341–343, 364–365, and 388–392; these read DGG, GS, and YRGMG. R406 acts as the Proton acceptor in catalysis. IMP is bound at residue E421. K(+) contacts are provided by E475, S476, and H477.

It belongs to the IMPDH/GMPR family. Homotetramer. The cofactor is K(+).

It carries out the reaction IMP + NAD(+) + H2O = XMP + NADH + H(+). Its pathway is purine metabolism; XMP biosynthesis via de novo pathway; XMP from IMP: step 1/1. Mycophenolic acid (MPA) is a non-competitive inhibitor that prevents formation of the closed enzyme conformation by binding to the same site as the amobile flap. In contrast, mizoribine monophosphate (MZP) is a competitive inhibitor that induces the closed conformation. MPA is a potent inhibitor of mammalian IMPDHs but a poor inhibitor of the bacterial enzymes. MZP is a more potent inhibitor of bacterial IMPDH. Its function is as follows. Catalyzes the conversion of inosine 5'-phosphate (IMP) to xanthosine 5'-phosphate (XMP), the first committed and rate-limiting step in the de novo synthesis of guanine nucleotides, and therefore plays an important role in the regulation of cell growth. This Chlorobaculum tepidum (strain ATCC 49652 / DSM 12025 / NBRC 103806 / TLS) (Chlorobium tepidum) protein is Inosine-5'-monophosphate dehydrogenase.